A 498-amino-acid polypeptide reads, in one-letter code: NADP-dependent glyceraldehyde-3-phosphate dehydrogenase (498 aa).

Residues R118 and 171–172 (NY) contribute to the substrate site. NADP(+) is bound by residues K194, T197, and D232. Residue 247–251 (GGDTG) participates in NAD(+) binding. Catalysis depends on E266, which acts as the Proton acceptor. 299–301 (RCT) contributes to the substrate binding site. The Nucleophile role is filled by C300. E393 provides a ligand contact to NADP(+). Substrate is bound at residue R453.

This sequence belongs to the aldehyde dehydrogenase family.

The protein resides in the cytoplasm. It catalyses the reaction D-glyceraldehyde 3-phosphate + NADP(+) + H2O = (2R)-3-phosphoglycerate + NADPH + 2 H(+). Its function is as follows. Important as a means of generating NADPH for biosynthetic reactions. The polypeptide is NADP-dependent glyceraldehyde-3-phosphate dehydrogenase (GPN1) (Zea mays (Maize)).